We begin with the raw amino-acid sequence, 432 residues long: Probable M18 family aminopeptidase 2 (432 aa).

Residues H86, H157, and H408 each contribute to the Zn(2+) site.

It belongs to the peptidase M18 family. Requires Zn(2+) as cofactor.

This is Probable M18 family aminopeptidase 2 (apeB) from Streptomyces coelicolor (strain ATCC BAA-471 / A3(2) / M145).